The chain runs to 404 residues: Nicotinate phosphoribosyltransferase (404 aa).

A Phosphohistidine; by autocatalysis modification is found at His-224.

Belongs to the NAPRTase family. Transiently phosphorylated on a His residue during the reaction cycle. Phosphorylation strongly increases the affinity for substrates and increases the rate of nicotinate D-ribonucleotide production. Dephosphorylation regenerates the low-affinity form of the enzyme, leading to product release.

The enzyme catalyses nicotinate + 5-phospho-alpha-D-ribose 1-diphosphate + ATP + H2O = nicotinate beta-D-ribonucleotide + ADP + phosphate + diphosphate. It participates in cofactor biosynthesis; NAD(+) biosynthesis; nicotinate D-ribonucleotide from nicotinate: step 1/1. Functionally, catalyzes the synthesis of beta-nicotinate D-ribonucleotide from nicotinate and 5-phospho-D-ribose 1-phosphate at the expense of ATP. This is Nicotinate phosphoribosyltransferase from Photorhabdus laumondii subsp. laumondii (strain DSM 15139 / CIP 105565 / TT01) (Photorhabdus luminescens subsp. laumondii).